A 596-amino-acid chain; its full sequence is Nuclear receptor subfamily 2 group C member 2 (596 aa).

The residue at position 19 (serine 19) is a Phosphoserine; by MAPK. Serine 46 is modified (phosphoserine). Phosphoserine; by MAPK occurs at positions 55 and 68. Serine 98 is modified (phosphoserine). Residues 114–189 constitute a DNA-binding region (nuclear receptor); it reads VEYCVVCGDK…MGMKMESVQS (76 aa). 2 NR C4-type zinc fingers span residues 117–137 and 153–177; these read CVVC…CEGC and CRSS…LKKC. A Glycyl lysine isopeptide (Lys-Gly) (interchain with G-Cter in SUMO2) cross-link involves residue lysine 192. Serine 219 carries the phosphoserine modification. An N6-acetyllysine modification is found at lysine 231. The NR LBD domain occupies 341–583; that stretch reads GSIHVISRDQ…SIIPYILKME (243 aa).

It belongs to the nuclear hormone receptor family. NR2 subfamily. In terms of assembly, homodimer; can bind DNA as homodimer. Heterodimer; binds DNA as a heterodimer with NR2C1 required for chromatin remodeling and for binding to promoter regions such as globin DR1 repeats. Interacts with NR2C2AP; the interaction represses selective NR2C2-mediated transcriptional activity. Interacts with PCAF; the interaction preferentially occurs on the non-phosphorylated form and induces NR2C2-mediated transactivation activity and does not require the ligand-binding domain. Interacts (MAPK-mediated phosphorylated form) with NRIP1; the interaction promotes repression of NR2C2-mediated activity. Interacts with NLRP10. Interacts (via ligand-binding region) with transcriptional corepressor JAZF1; the interaction promotes NR2C2-mediated transcriptional repression. Phosphorylation on Ser-19 and Ser-68 is an important regulator of NR2C2-mediated transcriptional activity. Phosphorylation on these residues recruits the corepressor, NRIP1, leading to transcripional repression, whereas the non-phosphorylated form preferentially recruits the coactivator, PCAF. Expressed, during embryogenesis, in perichondrium, developing glomeruli structures and tubules of kidney, as well as in intestiinal villi. Also expressed in lung and hair follicles.

It is found in the nucleus. Functionally, orphan nuclear receptor that can act as a repressor or activator of transcription. An important repressor of nuclear receptor signaling pathways such as retinoic acid receptor, retinoid X, vitamin D3 receptor, thyroid hormone receptor and estrogen receptor pathways. May regulate gene expression during the late phase of spermatogenesis. Activates transcriptional activity of LHCG and is antagonist of PPARA-mediated transactivation. Together with NR2C1, forms the core of the DRED (direct repeat erythroid-definitive) complex that represses embryonic and fetal globin transcription including that of GATA1. Binds to hormone response elements (HREs) consisting of two 5'-AGGTCA-3' half site direct repeat consensus sequences. Plays a fundamental role in early embryonic development and embryonic stem cells. Required for normal spermatogenesis and cerebellum development. Appears to be important for neurodevelopmentally regulated behavior. The polypeptide is Nuclear receptor subfamily 2 group C member 2 (Nr2c2) (Mus musculus (Mouse)).